The chain runs to 318 residues: tRNA-modifying protein YgfZ (318 aa).

Folate contacts are provided by Trp24 and Trp185.

Belongs to the tRNA-modifying YgfZ family.

It localises to the cytoplasm. Functionally, folate-binding protein involved in regulating the level of ATP-DnaA and in the modification of some tRNAs. It is probably a key factor in regulatory networks that act via tRNA modification, such as initiation of chromosomal replication. This is tRNA-modifying protein YgfZ from Buchnera aphidicola subsp. Baizongia pistaciae (strain Bp).